Reading from the N-terminus, the 336-residue chain is Phosphate acyltransferase (336 aa).

The protein belongs to the PlsX family. Homodimer. Probably interacts with PlsY.

The protein resides in the cytoplasm. The catalysed reaction is a fatty acyl-[ACP] + phosphate = an acyl phosphate + holo-[ACP]. It participates in lipid metabolism; phospholipid metabolism. In terms of biological role, catalyzes the reversible formation of acyl-phosphate (acyl-PO(4)) from acyl-[acyl-carrier-protein] (acyl-ACP). This enzyme utilizes acyl-ACP as fatty acyl donor, but not acyl-CoA. This Pseudomonas fluorescens (strain ATCC BAA-477 / NRRL B-23932 / Pf-5) protein is Phosphate acyltransferase.